The primary structure comprises 178 residues: MSGGKYVDSEGHLYTVPIREQGNIYKPNNKAMAEEMSEKQVYDAHTKEIDLVNRDPKHLNDDVVKIDFEDVIAEPEGTHSFDGIWKASFTTFTVTKYWFYRLLSALFGIPMALIWGIYFAILSFLHIWAVVPCIKSFLIEIQCISRVYSIYVHTFCDPFFEAVGKIFSNIRINMQKET.

The residue at position 2 (Ser-2) is an N-acetylserine. Ser-2 carries the post-translational modification Phosphoserine. A required for homooligomerization region spans residues 2–94 (SGGKYVDSEG…WKASFTTFTV (93 aa)). The Cytoplasmic segment spans residues 2-104 (SGGKYVDSEG…TKYWFYRLLS (103 aa)). An N6-acetyllysine; alternate modification is found at Lys-5. A Glycyl lysine isopeptide (Lys-Gly) (interchain with G-Cter in ubiquitin); alternate cross-link involves residue Lys-5. The residue at position 6 (Tyr-6) is a Phosphotyrosine. A Phosphoserine modification is found at Ser-9. The residue at position 14 (Tyr-14) is a Phosphotyrosine; by ABL1. At Tyr-25 the chain carries Phosphotyrosine. Glycyl lysine isopeptide (Lys-Gly) (interchain with G-Cter in ubiquitin) cross-links involve residues Lys-26 and Lys-30. Ser-37 is subject to Phosphoserine. Glycyl lysine isopeptide (Lys-Gly) (interchain with G-Cter in ubiquitin) cross-links involve residues Lys-39, Lys-47, and Lys-57. An interaction with CAVIN3 region spans residues 82 to 94 (DGIWKASFTTFTV). The segment at residues 105–125 (ALFGIPMALIWGIYFAILSFL) is an intramembrane region (helical). Over 126-178 (HIWAVVPCIKSFLIEIQCISRVYSIYVHTFCDPFFEAVGKIFSNIRINMQKET) the chain is Cytoplasmic. The segment at 131 to 142 (VPCIKSFLIEIQ) is interacts with SPRY1, SPRY2, SPRY3 and SPRY4. S-palmitoyl cysteine attachment occurs at residues Cys-133, Cys-143, and Cys-156. The interval 149 to 160 (SIYVHTFCDPFF) is interacts with SPRY1, SPRY2, and SPRY4. The segment at 167-178 (FSNIRINMQKET) is interacts with SPRY1, SPRY2, SPRY3 and SPRY4.

It belongs to the caveolin family. As to quaternary structure, homooligomer. Interacts with BMX, BTK, GLIPR2, NOSTRIN, SNAP25 and STX1A. Interacts with PACSIN2; this interaction induces membrane tubulation. Interacts (via the N-terminus) with DPP4; the interaction is direct. Interacts with SLC7A9. Interacts with CTNNB1, CDH1 and JUP. Interacts with TGFBR1. Interacts with CAVIN3 (via leucine-zipper domain) in a cholesterol-sensitive manner. Interacts with CAVIN1. Interacts with EHD2 in a cholesterol-dependent manner. Forms a ternary complex with UBXN6 and VCP; mediates CAV1 targeting to lysosomes for degradation. Interacts with ABCG1; this interaction regulates ABCG1-mediated cholesterol efflux. Interacts with NEU3; this interaction enhances NEU3 sialidase activity within caveola. Interacts (via C-terminus) with SPRY1, SPRY2 (via C-terminus), SPRY3, and SPRY4. Interacts with IGFBP5; this interaction allows trafficking of IGFBP5 from the plasma membrane to the nucleus. Post-translationally, phosphorylation of isoform Beta on serine residues is constitutive. Phosphorylated at Tyr-14 by ABL1 in response to oxidative stress. Ubiquitinated. Undergo monoubiquitination and multi- and/or polyubiquitination. Monoubiquitination of N-terminal lysines promotes integration in a ternary complex with UBXN6 and VCP which promotes oligomeric CAV1 targeting to lysosomes for degradation. Ubiquitinated by ZNRF1; leading to degradation and modulation of the TLR4-mediated immune response.

The protein resides in the golgi apparatus membrane. It is found in the cell membrane. It localises to the membrane. Its subcellular location is the caveola. The protein localises to the membrane raft. The protein resides in the golgi apparatus. It is found in the trans-Golgi network. May act as a scaffolding protein within caveolar membranes. Forms a stable heterooligomeric complex with CAV2 that targets to lipid rafts and drives caveolae formation. Mediates the recruitment of CAVIN proteins (CAVIN1/2/3/4) to the caveolae. Interacts directly with G-protein alpha subunits and can functionally regulate their activity. Involved in the costimulatory signal essential for T-cell receptor (TCR)-mediated T-cell activation. Its binding to DPP4 induces T-cell proliferation and NF-kappa-B activation in a T-cell receptor/CD3-dependent manner. Recruits CTNNB1 to caveolar membranes and may regulate CTNNB1-mediated signaling through the Wnt pathway. Negatively regulates TGFB1-mediated activation of SMAD2/3 by mediating the internalization of TGFBR1 from membrane rafts leading to its subsequent degradation. Binds 20(S)-hydroxycholesterol (20(S)-OHC). The protein is Caveolin-1 (CAV1) of Canis lupus familiaris (Dog).